The following is a 484-amino-acid chain: Adenylosuccinate lyase (484 aa).

Ala2 carries the N-acetylalanine modification. Substrate-binding positions include Arg20–Tyr21, Arg85–Asp87, and Thr111–Ser112. Lys147 carries the N6-acetyllysine modification. His159 acts as the Proton donor/acceptor in catalysis. A substrate-binding site is contributed by Gln241. Ser289 functions as the Proton donor/acceptor in the catalytic mechanism. Position 295 is an N6-acetyllysine (Lys295). Residues Arg303, Arg329, Ser334, and Arg338 each contribute to the substrate site. Lys415 is covalently cross-linked (Glycyl lysine isopeptide (Lys-Gly) (interchain with G-Cter in SUMO1)).

This sequence belongs to the lyase 1 family. Adenylosuccinate lyase subfamily. As to quaternary structure, homotetramer. Residues from neighboring subunits contribute catalytic and substrate-binding residues to each active site.

The catalysed reaction is N(6)-(1,2-dicarboxyethyl)-AMP = fumarate + AMP. The enzyme catalyses (2S)-2-[5-amino-1-(5-phospho-beta-D-ribosyl)imidazole-4-carboxamido]succinate = 5-amino-1-(5-phospho-beta-D-ribosyl)imidazole-4-carboxamide + fumarate. It participates in purine metabolism; AMP biosynthesis via de novo pathway; AMP from IMP: step 2/2. Its pathway is purine metabolism; IMP biosynthesis via de novo pathway; 5-amino-1-(5-phospho-D-ribosyl)imidazole-4-carboxamide from 5-amino-1-(5-phospho-D-ribosyl)imidazole-4-carboxylate: step 2/2. In terms of biological role, catalyzes two non-sequential steps in de novo AMP synthesis: converts (S)-2-(5-amino-1-(5-phospho-D-ribosyl)imidazole-4-carboxamido)succinate (SAICAR) to fumarate plus 5-amino-1-(5-phospho-D-ribosyl)imidazole-4-carboxamide, and thereby also contributes to de novo IMP synthesis, and converts succinyladenosine monophosphate (SAMP) to AMP and fumarate. This is Adenylosuccinate lyase (Adsl) from Mus musculus (Mouse).